The sequence spans 292 residues: uncharacterized protein (292 aa).

4 helical membrane passes run 17 to 37, 135 to 155, 166 to 186, and 216 to 236; these read LFYTFVLVAWLFIGMILFPAL, LIAVLYALIGTPLFLTVIGQL, TTLWIVTIVYIFISAVIYDIV, and FHGVLPYCIVVLGLALITALY. The interval 267 to 292 is disordered; the sequence is EKSEDKKSIVTSRIEEENEDEISDYE. Residues 282–292 are compositionally biased toward acidic residues; the sequence is EENEDEISDYE.

The protein localises to the membrane. This is an uncharacterized protein from Caenorhabditis elegans.